Reading from the N-terminus, the 236-residue chain is 6-carboxyhexanoate--CoA ligase (236 aa).

The protein belongs to the BioW family. In terms of assembly, homodimer. Mg(2+) is required as a cofactor.

It catalyses the reaction heptanedioate + ATP + CoA = 6-carboxyhexanoyl-CoA + AMP + diphosphate. The protein operates within metabolic intermediate metabolism; pimeloyl-CoA biosynthesis; pimeloyl-CoA from pimelate: step 1/1. In terms of biological role, catalyzes the transformation of pimelate into pimeloyl-CoA with concomitant hydrolysis of ATP to AMP. In Methanococcus aeolicus (strain ATCC BAA-1280 / DSM 17508 / OCM 812 / Nankai-3), this protein is 6-carboxyhexanoate--CoA ligase.